We begin with the raw amino-acid sequence, 348 residues long: D-alanine--D-alanine ligase (348 aa).

Residues 132–334 (KRVLESIGIP…YPDLIEELVT (203 aa)) form the ATP-grasp domain. 162–217 (LARLTFPIFVKPANMGSSVGISKAQTKVELRKAIQLALTYDSRVLIEQGVVAREIE) contributes to the ATP binding site. Mg(2+) is bound by residues aspartate 288, glutamate 301, and asparagine 303.

Belongs to the D-alanine--D-alanine ligase family. It depends on Mg(2+) as a cofactor. Mn(2+) is required as a cofactor.

The protein resides in the cytoplasm. The catalysed reaction is 2 D-alanine + ATP = D-alanyl-D-alanine + ADP + phosphate + H(+). It participates in cell wall biogenesis; peptidoglycan biosynthesis. Functionally, cell wall formation. This is D-alanine--D-alanine ligase from Streptococcus pyogenes serotype M3 (strain SSI-1).